A 297-amino-acid polypeptide reads, in one-letter code: uncharacterized protein (297 aa).

Residues 1 to 12 (MASYSFQFSTDA) show a composition bias toward polar residues. The disordered stretch occupies residues 1-21 (MASYSFQFSTDATGKPGAAKP).

It to B.subtilis XkdY/XepA.

This is an uncharacterized protein from Bacillus subtilis (strain 168).